Reading from the N-terminus, the 100-residue chain is Urease subunit gamma (100 aa).

Belongs to the urease gamma subunit family. Heterotrimer of UreA (gamma), UreB (beta) and UreC (alpha) subunits. Three heterotrimers associate to form the active enzyme.

The protein resides in the cytoplasm. It carries out the reaction urea + 2 H2O + H(+) = hydrogencarbonate + 2 NH4(+). It participates in nitrogen metabolism; urea degradation; CO(2) and NH(3) from urea (urease route): step 1/1. The polypeptide is Urease subunit gamma (Actinobacillus pleuropneumoniae (Haemophilus pleuropneumoniae)).